The chain runs to 354 residues: Nicotinate-nucleotide--dimethylbenzimidazole phosphoribosyltransferase (354 aa).

Glutamate 322 acts as the Proton acceptor in catalysis.

This sequence belongs to the CobT family.

It carries out the reaction 5,6-dimethylbenzimidazole + nicotinate beta-D-ribonucleotide = alpha-ribazole 5'-phosphate + nicotinate + H(+). The protein operates within nucleoside biosynthesis; alpha-ribazole biosynthesis; alpha-ribazole from 5,6-dimethylbenzimidazole: step 1/2. Its function is as follows. Catalyzes the synthesis of alpha-ribazole-5'-phosphate from nicotinate mononucleotide (NAMN) and 5,6-dimethylbenzimidazole (DMB). The protein is Nicotinate-nucleotide--dimethylbenzimidazole phosphoribosyltransferase of Solidesulfovibrio magneticus (strain ATCC 700980 / DSM 13731 / RS-1) (Desulfovibrio magneticus).